Here is a 168-residue protein sequence, read N- to C-terminus: uncharacterized protein (168 aa).

Disordered regions lie at residues 1-35 (MGSS…KKLD), 48-97 (KVKK…DKGN), and 126-168 (ASIT…GLGM). Residues 29-95 (KEKKKLDEKE…KNSLSRSQDK (67 aa)) adopt a coiled-coil conformation. A compositionally biased stretch (basic and acidic residues) spans 68–85 (LAEDPMVKNVAENDHDQM). Positions 126 to 139 (ASITESSPSAQSNK) are enriched in polar residues. The span at 140-150 (TNDKQREKELE) shows a compositional bias: basic and acidic residues. Positions 157-168 (VLHKGTKKGLGM) are enriched in basic residues.

This is an uncharacterized protein from Schizosaccharomyces pombe (strain 972 / ATCC 24843) (Fission yeast).